Reading from the N-terminus, the 512-residue chain is Maturase K (512 aa).

It belongs to the intron maturase 2 family. MatK subfamily.

It is found in the plastid. The protein localises to the chloroplast. Usually encoded in the trnK tRNA gene intron. Probably assists in splicing its own and other chloroplast group II introns. The chain is Maturase K from Alisma canaliculatum (Water plantain).